A 165-amino-acid chain; its full sequence is Phosphopantetheine adenylyltransferase (165 aa).

Position 10 (Thr10) interacts with substrate. Residues 10–11 (TF) and His18 each bind ATP. Positions 42, 75, and 89 each coordinate substrate. ATP is bound by residues 90–92 (GLR), Glu100, and 125–131 (YTYVASS).

This sequence belongs to the bacterial CoaD family. Homohexamer. Requires Mg(2+) as cofactor.

It is found in the cytoplasm. It catalyses the reaction (R)-4'-phosphopantetheine + ATP + H(+) = 3'-dephospho-CoA + diphosphate. Its pathway is cofactor biosynthesis; coenzyme A biosynthesis; CoA from (R)-pantothenate: step 4/5. In terms of biological role, reversibly transfers an adenylyl group from ATP to 4'-phosphopantetheine, yielding dephospho-CoA (dPCoA) and pyrophosphate. This is Phosphopantetheine adenylyltransferase from Chlorobium phaeobacteroides (strain BS1).